Reading from the N-terminus, the 873-residue chain is MANITPMMQQYLKIKSEYDDCLLFFRLGDFYEMFFDDAKEASRVLEITLTKRDAKKENPIPMCGVPYHSADNYIETLINKGYKVAICEQMEDPKQTKGMVRREVVRIITPGTVMDQNGMDEKKNNYILSFIENEEFGLCYCDVSTGELKVTHFKDTATLLNEITTINPNEIVIKQALSEELKRQINMITETITVREDISDEDYDMNQLTHQLMHDTTQLLLDYIHHTQKRDLSHIEEVIEYAAVDYMKMDYYAKRNLELTESIRLKSKKGTLLWLMDETKTPMGARRLKQWIDRPLINKQQINDRLNIVEEFMDRFIERDTLRNHLNQVYDIERLVGRVSYGNVNARDLIQLKHSISEIPHIKALLNELGAQTTTQFKELEPLDDLLQILEESLVEEPPISIKDGGLFKNGFNAQLDEYLEASKNGKTWLAELQAKERERTGIKSLKISFNKVFGYFIEITRANLNNFQPEAFGYNRKQTLSNAERFITDELKEKEDIILGAEDKAVELEYELFVKLREHIKTYTERLQKQAKIISELDCLQSFAEIAQKYNYVKPTFSDDKVLHLENSRHPVVERVMDYNDYVPNDCHLDDETFIYLITGPNMSGKSTYMRQVAIISIMAQMGAYVPCDSATLPIFDQIFTRIGAADDLVSGKSTFMVEMLEAQKALTYATENSLIIFDEIGRGTSTYDGLALAQAMIEYVAQTSHAKTLFSTHYHELTSLDQMLKCLKNVHVAANEYQGELIFLHKVKDGAVDDSYGIQVAKLADLPNEVIDRAQVILNAFEQKPSYQLSHENTDNQQTVPSYNDFGRTEEEQSVIETHTSNHNYEQATFDLFDGYNQQSEVECQIRELNLSNMTPLEALIKLNELQSQLK.

Position 601-608 (601-608 (GPNMSGKS)) interacts with ATP.

This sequence belongs to the DNA mismatch repair MutS family.

Its function is as follows. This protein is involved in the repair of mismatches in DNA. It is possible that it carries out the mismatch recognition step. This protein has a weak ATPase activity. The sequence is that of DNA mismatch repair protein MutS from Staphylococcus epidermidis (strain ATCC 12228 / FDA PCI 1200).